The following is a 331-amino-acid chain: Phosphoribosylformylglycinamidine cyclo-ligase (331 aa).

This sequence belongs to the AIR synthase family.

Its subcellular location is the cytoplasm. It catalyses the reaction 2-formamido-N(1)-(5-O-phospho-beta-D-ribosyl)acetamidine + ATP = 5-amino-1-(5-phospho-beta-D-ribosyl)imidazole + ADP + phosphate + H(+). Its pathway is purine metabolism; IMP biosynthesis via de novo pathway; 5-amino-1-(5-phospho-D-ribosyl)imidazole from N(2)-formyl-N(1)-(5-phospho-D-ribosyl)glycinamide: step 2/2. The polypeptide is Phosphoribosylformylglycinamidine cyclo-ligase (Clostridium botulinum (strain ATCC 19397 / Type A)).